The following is a 236-amino-acid chain: Purine nucleoside phosphorylase DeoD-type (236 aa).

H5 is a binding site for a purine D-ribonucleoside. Residues G21, R25, R44, and 88-91 (RVGT) contribute to the phosphate site. A purine D-ribonucleoside-binding positions include 180–182 (EME) and 204–205 (SD). The active-site Proton donor is D205.

It belongs to the PNP/UDP phosphorylase family. In terms of assembly, homohexamer; trimer of homodimers.

It carries out the reaction a purine D-ribonucleoside + phosphate = a purine nucleobase + alpha-D-ribose 1-phosphate. It catalyses the reaction a purine 2'-deoxy-D-ribonucleoside + phosphate = a purine nucleobase + 2-deoxy-alpha-D-ribose 1-phosphate. Catalyzes the reversible phosphorolytic breakdown of the N-glycosidic bond in the beta-(deoxy)ribonucleoside molecules, with the formation of the corresponding free purine bases and pentose-1-phosphate. The polypeptide is Purine nucleoside phosphorylase DeoD-type (Shewanella amazonensis (strain ATCC BAA-1098 / SB2B)).